Reading from the N-terminus, the 217-residue chain is UPF0323 lipoprotein HPP12_0232 (217 aa).

The first 27 residues, 1 to 27, serve as a signal peptide directing secretion; sequence MKKPYRKISDYAIVGGLSALVMVSIVG. The N-palmitoyl cysteine moiety is linked to residue cysteine 28. Cysteine 28 carries the S-diacylglycerol cysteine lipid modification. Positions 160–171 are enriched in polar residues; sequence QRTYKSPQAYQR. Positions 160-217 are disordered; that stretch reads QRTYKSPQAYQRSQNSFSKSAPSASSMGTASKGQSGFFGSSRPTSSPAISSGTRGFNS. The span at 172–185 shows a compositional bias: low complexity; the sequence is SQNSFSKSAPSASS. Positions 186–197 are enriched in polar residues; the sequence is MGTASKGQSGFF. Positions 199–210 are enriched in low complexity; the sequence is SSRPTSSPAISS.

It belongs to the UPF0323 family.

It localises to the cell membrane. In Helicobacter pylori (strain P12), this protein is UPF0323 lipoprotein HPP12_0232.